Reading from the N-terminus, the 1177-residue chain is Dynein axonemal assembly factor 9 (1177 aa).

Residues 1–27 form a disordered region; the sequence is MDVYPPRRQGLPRARSPGGSSRGSPSV. The segment covering 11–27 has biased composition (low complexity); it reads LPRARSPGGSSRGSPSV.

As to quaternary structure, interacts with ARL3.

Functionally, may act as an effector for ARL3. In Homo sapiens (Human), this protein is Dynein axonemal assembly factor 9.